A 911-amino-acid chain; its full sequence is DNA ligase 4 (911 aa).

ATP contacts are provided by E271, T272, K273, L274, R278, E331, K345, F367, E427, K432, K449, and K451. K273 functions as the N6-AMP-lysine intermediate in the catalytic mechanism. Residue E331 coordinates Mg(2+). Position 427 (E427) interacts with Mg(2+). The interval 610–620 (LASKHFYVGGD) is required for catalytic activity. 2 BRCT domains span residues 654-743 (KISN…PHFM) and 808-911 (SPLS…QYLI).

The protein belongs to the ATP-dependent DNA ligase family. In terms of assembly, interacts with XRCC4; the LIG4-XRCC4 subcomplex has a 1:2 stoichiometry and XRCC4 is required for LIG4 stability. Component of the core long-range non-homologous end joining (NHEJ) complex (also named DNA-PK complex) composed of PRKDC, LIG4, XRCC4, XRCC6/Ku70, XRCC5/Ku86 and NHEJ1/XLF. Additional component of the NHEJ complex includes PAXX. Following autophosphorylation, PRKDC dissociates from DNA, leading to formation of the short-range NHEJ complex, composed of LIG4, XRCC4, XRCC6/Ku70, XRCC5/Ku86 and NHEJ1/XLF. Interacts with DCLRE1C; the interaction is direct. Interacts with APLF. It depends on Mg(2+) as a cofactor.

It localises to the nucleus. It catalyses the reaction ATP + (deoxyribonucleotide)n-3'-hydroxyl + 5'-phospho-(deoxyribonucleotide)m = (deoxyribonucleotide)n+m + AMP + diphosphate.. In terms of biological role, DNA ligase involved in DNA non-homologous end joining (NHEJ); required for double-strand break (DSB) repair and V(D)J recombination. Catalyzes the NHEJ ligation step of the broken DNA during DSB repair by resealing the DNA breaks after the gap filling is completed. Joins single-strand breaks in a double-stranded polydeoxynucleotide in an ATP-dependent reaction. LIG4 is mechanistically flexible: it can ligate nicks as well as compatible DNA overhangs alone, while in the presence of XRCC4, it can ligate ends with 2-nucleotides (nt) microhomology and 1-nt gaps. Forms a subcomplex with XRCC4; the LIG4-XRCC4 subcomplex is responsible for the NHEJ ligation step and XRCC4 enhances the joining activity of LIG4. Binding of the LIG4-XRCC4 complex to DNA ends is dependent on the assembly of the DNA-dependent protein kinase complex DNA-PK to these DNA ends. LIG4 regulates nuclear localization of XRCC4. The protein is DNA ligase 4 of Pongo abelii (Sumatran orangutan).